Here is an 800-residue protein sequence, read N- to C-terminus: MKFTIGWLKDHLDTQASVADIAEKLTALGLEVDAIEDPTAALAPFVVGHVIEAGPHPDADRLKLCRVDSGTDILQIVCGAPNARTGLKVALALPGAVIPATGDVLKKGKIRGIESQGMMCSTRELGLGEDHDGIIELPADTPVGVPLVDVLALDPVIDIAITPNRADALGVRGIARDLAAGGLGGVIADTLTAIPGRFPSPIGVAIDPETLASGACSHYVGRYFRGVRNGESPAWLKDRLNAIGVRPISLLVDITNYVTFDRARPLHVFDADKLTGTTITARPARQGEILRALDGRSYTLDAPVVAIADGAGPQGLGGIMGGEDTGVDENTVNVFLESALFDPANTAAAGRFLGIDSDARYRFERGVDPESCLLGAELATRMILDLCGGEASELVIAGAPPVWRRTIALRPARVARLGGVAVERAEMVAKLRALGCTVEDDGAEALRVDPPSWRVDIGAEHDLIEEVVRLHGFDLVPAVPLPRDPMPKAVLTPGQRRMITVKRTLATRGMLEAVTWSFLPRAVAKGFGGGQDALVLANPISSDLDAMRPSILPNLIAAAGRNAARGYGDLGLFEVGPRFHGGEPGQQTLVAAGLRAGKIAPRHWSRPARDADLYDIKADVLAAIEAAGAPTASLQVSADAPAWFHPGRSGQIRLGRTVLAAFGEIHPAALALLDVKGPMVGFELDLDALPLPKGRPSKTRPPLTLSPFQPVARDFAFVVEAGVAGDAVIKAARGADKALITDVVIFDVYQGDRLEAGRKSLALSVTLQPTDHTLSDEEIEAVSARIVGAVTKLTGGSLRS.

The 110-residue stretch at 39 to 148 (TAALAPFVVG…ADTPVGVPLV (110 aa)) folds into the tRNA-binding domain. A B5 domain is found at 402–478 (VWRRTIALRP…RLHGFDLVPA (77 aa)). The Mg(2+) site is built by D456, D462, E465, and E466. The FDX-ACB domain occupies 706–799 (SPFQPVARDF…VTKLTGGSLR (94 aa)).

The protein belongs to the phenylalanyl-tRNA synthetase beta subunit family. Type 1 subfamily. Tetramer of two alpha and two beta subunits. The cofactor is Mg(2+).

It localises to the cytoplasm. It catalyses the reaction tRNA(Phe) + L-phenylalanine + ATP = L-phenylalanyl-tRNA(Phe) + AMP + diphosphate + H(+). This chain is Phenylalanine--tRNA ligase beta subunit, found in Rhodospirillum rubrum (strain ATCC 11170 / ATH 1.1.1 / DSM 467 / LMG 4362 / NCIMB 8255 / S1).